The following is a 173-amino-acid chain: FMN reductase (NADH) RutF 2 (173 aa).

This sequence belongs to the non-flavoprotein flavin reductase family. RutF subfamily.

It catalyses the reaction FMNH2 + NAD(+) = FMN + NADH + 2 H(+). Functionally, catalyzes the reduction of FMN to FMNH2 which is used to reduce pyrimidine by RutA via the Rut pathway. This chain is FMN reductase (NADH) RutF 2, found in Rhizobium rhizogenes (strain K84 / ATCC BAA-868) (Agrobacterium radiobacter).